A 1493-amino-acid chain; its full sequence is DNA excision repair protein ERCC-6 (1493 aa).

The segment at 1–39 (MPNEGIPHSSQTQEQDCLQSQPVSNNEEMAIKQESGGDG) is disordered. The segment at 1–510 (MPNEGIPHSS…GFLFKKLFKY (510 aa)) is N-terminal domain; essential for its chromatin remodeling activity. Residues 8–27 (HSSQTQEQDCLQSQPVSNNE) are compositionally biased toward polar residues. Serine 10 carries the phosphoserine; by ATM modification. The residue at position 158 (serine 158) is a Phosphoserine; by CDK2. Position 170 is an N6-methylated lysine; by EHMT2 (lysine 170). Lysine 205 participates in a covalent cross-link: Glycyl lysine isopeptide (Lys-Gly) (interchain with G-Cter in SUMO3). A Glycyl lysine isopeptide (Lys-Gly) (interchain with G-Cter in SUMO2) cross-link involves residue lysine 255. Disordered regions lie at residues 287–323 (KQGC…VLSK) and 344–453 (GKVG…GRYR). Lysine 297 carries the post-translational modification N6-methylated lysine; by EHMT2. Basic and acidic residues predominate over residues 353–363 (RPWESDMRPEA). Residues 364–392 (EGDSEGEESEYFPTEEEEEEEDDEVEGAE) are compositionally biased toward acidic residues. Serine 429 and serine 430 each carry phosphoserine. Lysine 448 carries the post-translational modification N6-methylated lysine; by EHMT2. Phosphoserine is present on residues serine 486 and serine 489. Positions 519–695 (WELHCQQAGG…WSLFDFIFPG (177 aa)) constitute a Helicase ATP-binding domain. An ATP-binding site is contributed by 532 to 539 (DEMGLGKT). The DEAH box signature appears at 646–649 (DEGH). The 160-residue stretch at 843–1002 (VVESLLKIWH…RRFFKSNDLY (160 aa)) folds into the Helicase C-terminal domain. Disordered stretches follow at residues 1042–1147 (PAFG…DESI), 1181–1247 (HKSK…EQSN), and 1318–1384 (RGIS…SGPL). Lysine 1054 is subject to N6-methylated lysine; by EHMT2. Positions 1123–1141 (ISGNGECSNSSGTGKTSMP) are enriched in polar residues. A Phosphoserine modification is found at serine 1142. Basic residues predominate over residues 1200–1210 (LRPKQKPKNSK). Basic and acidic residues-rich tracts occupy residues 1211 to 1221 (HCRDAKFEGTR) and 1232 to 1247 (QKQD…EQSN). The segment covering 1327–1336 (KKSRFGKKRN) has biased composition (basic residues). Residues 1337 to 1351 (SNFSVQHPSSTSPTE) are compositionally biased toward polar residues. Serine 1348 carries the phosphoserine modification. The span at 1352–1376 (KCQDGIMKKEGKDNVPEHFSGRAED) shows a compositional bias: basic and acidic residues. Residues 1386–1398 (SSSLLAKMRARNH) carry the CSA-interacting motif (CIM) motif. A ubiquitin-binding domain (UBD) region spans residues 1400 to 1428 (ILPERLESESGHLQEASALLPTTEHDDLL). The tract at residues 1429-1493 (VEMRNFIAFQ…GIWKLKPEYC (65 aa)) is winged-helix domain (WHD). The essential for its interaction with RNA polymerase II, transcription-coupled nucleotide excision repair activity, association with chromatin after UV irradiation and for mediating the UV-induced translocation of ERRC8 to the nuclear matrix stretch occupies residues 1446 to 1493 (STREILQEFESKLSASQSCVFRELLRNLCTFHRTSGGEGIWKLKPEYC).

The protein belongs to the SNF2/RAD54 helicase family. Homodimer. Binds DNA. Interacts with ERCC8. Interacts with RNA polymerase II; interaction is enhanced by UV irradiation. Component of the B-WICH complex, at least composed of SMARCA5/SNF2H, BAZ1B/WSTF, SF3B1, DEK, MYO1C, ERCC6, MYBBP1A and DDX21. Interacts with KIAA1530/UVSSA. Interacts with ELOA and CUL5; the interaction is induced by DNA damaging agents or by inhibitors of RNA polymerase II elongation. Interacts (via WHD region) with RIF1. Interacts with SMARCC2/BAF170, SMARCB1/BAF47 and the neuron-specific chromatin remodeling complex (nBAF complex). Interacts with ERCC5/XPG (via C-terminus); the interaction stimulates ERCC6/CSB binding to the DNA repair bubble and ERCC6/CSB ATPase activity. May form a complex composed of RNA polymerase II, ERCC6/CSB and ERCC5/XPG which associates with the DNA repair bubble during transcription-coupled nucleotide excision repair. Interacts with CAND1, CSTF1, DDX3X, DDX5, DDX17, DDX23, DHX36, HDAC1, HNRNPU, MTA2, PRPF3, PSMD3, RBBP4, SFPQ, SMARCA1, SMARCA2, TOP1, USP7, XRCC5, COPS3, COPS4, COPS6, DDX1, DDX41, GATAD2A, GATAD2B, PRPF4, PSMC5, SF3B2, CTR9, NONO, PSMD12 and TOP2A. In terms of processing, phosphorylated in a cell cycle-dependent manner at Ser-158 by cyclin A-CDK2 and at Ser-10 by ATM in response to DNA damage. Phosphorylation at these two sites promotes the intramolecular interaction of the N-terminal domain with the helicase ATP-binding domain, thereby probably releasing the inhibitory effect of the N-terminal domain on its ATPase activity. Phosphorylation is essential for its chromatin remodeling activity. Ubiquitinated at the C-terminus. Ubiquitination by the CSA complex leads to ERCC6 proteasomal degradation in a UV-dependent manner. Stabilized following interaction with KIAA1530/UVSSA, which promotes recruitment of deubiquitinating enzyme USP7, leading to deubiquitination of ERCC6 thereby preventing UV-induced degradation of ERCC6 by the proteasome. Post-translationally, sumoylation at Lys-205 in an UV-radiation-dependent manner is essential for its transcription-coupled nucleotide excision repair activity.

Its subcellular location is the nucleus. The protein resides in the chromosome. The enzyme catalyses ATP + H2O = ADP + phosphate + H(+). Functionally, essential factor involved in transcription-coupled nucleotide excision repair (TC-NER), a process during which RNA polymerase II-blocking lesions are rapidly removed from the transcribed strand of active genes. Plays a central role in the initiation of the TC-NER process: specifically recognizes and binds RNA polymerase II stalled at a lesion, and mediates recruitment of ERCC8/CSA, initiating DNA damage excision by TFIIH recruitment. Upon DNA-binding, it locally modifies DNA conformation by wrapping the DNA around itself, thereby modifying the interface between stalled RNA polymerase II and DNA. Acts as a chromatin remodeler at DSBs; DNA-dependent ATPase-dependent activity is essential for this function. Plays an important role in regulating the choice of the DNA double-strand breaks (DSBs) repair pathway and G2/M checkpoint activation; DNA-dependent ATPase activity is essential for this function. Regulates the DNA repair pathway choice by inhibiting non-homologous end joining (NHEJ), thereby promoting the homologous recombination (HR)-mediated repair of DSBs during the S/G2 phases of the cell cycle. Mediates the activation of the ATM- and CHEK2-dependent DNA damage responses thus preventing premature entry of cells into mitosis following the induction of DNA DSBs. Remodels chromatin by evicting histones from chromatin flanking DSBs, limiting RIF1 accumulation at DSBs thereby promoting BRCA1-mediated HR. Required for stable recruitment of ELOA and CUL5 to DNA damage sites. Also involved in UV-induced translocation of ERCC8 to the nuclear matrix. Essential for neuronal differentiation and neuritogenesis; regulates transcription and chromatin remodeling activities required during neurogenesis. The polypeptide is DNA excision repair protein ERCC-6 (Homo sapiens (Human)).